A 93-amino-acid chain; its full sequence is FMRFamide-like neuropeptides 22 (93 aa).

Residues 1–19 (MNRSMIALCVVLMVSLVSA) form the signal peptide. The propeptide occupies 20–46 (QVFDLDGQQLAGLEQNDARLMEQQVKR). Phenylalanine amide occurs at positions 55, 67, and 79. Positions 83–93 (SGAEAVSEQDY) are excised as a propeptide.

The protein belongs to the FARP (FMRFamide related peptide) family.

The protein resides in the secreted. FMRFamides and FMRFamide-like peptides are neuropeptides. In terms of biological role, SPSAKWMRF-amide: Acts as a ligand for the npr-22 receptor in vitro. This is FMRFamide-like neuropeptides 22 from Caenorhabditis elegans.